The chain runs to 377 residues: Flagellin (377 aa).

This sequence belongs to the bacterial flagellin family.

The protein resides in the secreted. It is found in the bacterial flagellum. Its function is as follows. Flagellin is the subunit protein which polymerizes to form the filaments of bacterial flagella. In Clostridium tyrobutyricum, this protein is Flagellin (fla).